Reading from the N-terminus, the 261-residue chain is Cytochrome c oxidase subunit 3 (261 aa).

Residues 1–15 (MTHQTHAYHMVNPSP) are Mitochondrial matrix-facing. A helical transmembrane segment spans residues 16–34 (WPLTGALSALLMTSGLTMW). At 35–40 (FHFNSM) the chain is on the mitochondrial intermembrane side. The chain crosses the membrane as a helical span at residues 41–66 (LLLSLGLLTNTLTMYQWWRDIIREST). Residues 67-72 (FQGHHT) lie on the Mitochondrial matrix side of the membrane. The chain crosses the membrane as a helical span at residues 73–105 (SVVQKGLRYGMILFIISEVLFFTGFFWAFYHSS). Over 106 to 128 (LAPTPELGGCWPPTGIHPLNPLE) the chain is Mitochondrial intermembrane. Residues 129–152 (VPLLNTSILLASGVSITWAHHSLM) form a helical membrane-spanning segment. Topologically, residues 153–155 (EGD) are mitochondrial matrix. The helical transmembrane segment at 156–183 (RKHMIQALSITIALGVYFTLLQASEYYE) threads the bilayer. The Mitochondrial intermembrane segment spans residues 184-190 (APFTISD). A helical transmembrane segment spans residues 191–223 (GVYGSTFFVATGFHGLHVIIGSTFLAVCLLRQL). Residues 224-232 (KFHFTSNHH) are Mitochondrial matrix-facing. Residues 233–256 (FGFEAAAWYWHFVDVVWLFLYVSI) traverse the membrane as a helical segment. The Mitochondrial intermembrane portion of the chain corresponds to 257-261 (YWWGS).

Belongs to the cytochrome c oxidase subunit 3 family. Component of the cytochrome c oxidase (complex IV, CIV), a multisubunit enzyme composed of 14 subunits. The complex is composed of a catalytic core of 3 subunits MT-CO1, MT-CO2 and MT-CO3, encoded in the mitochondrial DNA, and 11 supernumerary subunits COX4I, COX5A, COX5B, COX6A, COX6B, COX6C, COX7A, COX7B, COX7C, COX8 and NDUFA4, which are encoded in the nuclear genome. The complex exists as a monomer or a dimer and forms supercomplexes (SCs) in the inner mitochondrial membrane with NADH-ubiquinone oxidoreductase (complex I, CI) and ubiquinol-cytochrome c oxidoreductase (cytochrome b-c1 complex, complex III, CIII), resulting in different assemblies (supercomplex SCI(1)III(2)IV(1) and megacomplex MCI(2)III(2)IV(2)).

The protein localises to the mitochondrion inner membrane. It carries out the reaction 4 Fe(II)-[cytochrome c] + O2 + 8 H(+)(in) = 4 Fe(III)-[cytochrome c] + 2 H2O + 4 H(+)(out). In terms of biological role, component of the cytochrome c oxidase, the last enzyme in the mitochondrial electron transport chain which drives oxidative phosphorylation. The respiratory chain contains 3 multisubunit complexes succinate dehydrogenase (complex II, CII), ubiquinol-cytochrome c oxidoreductase (cytochrome b-c1 complex, complex III, CIII) and cytochrome c oxidase (complex IV, CIV), that cooperate to transfer electrons derived from NADH and succinate to molecular oxygen, creating an electrochemical gradient over the inner membrane that drives transmembrane transport and the ATP synthase. Cytochrome c oxidase is the component of the respiratory chain that catalyzes the reduction of oxygen to water. Electrons originating from reduced cytochrome c in the intermembrane space (IMS) are transferred via the dinuclear copper A center (CU(A)) of subunit 2 and heme A of subunit 1 to the active site in subunit 1, a binuclear center (BNC) formed by heme A3 and copper B (CU(B)). The BNC reduces molecular oxygen to 2 water molecules using 4 electrons from cytochrome c in the IMS and 4 protons from the mitochondrial matrix. In Sus scrofa (Pig), this protein is Cytochrome c oxidase subunit 3 (MT-CO3).